Here is a 328-residue protein sequence, read N- to C-terminus: Malate dehydrogenase (328 aa).

12 to 18 is an NAD(+) binding site; the sequence is GAAGQIG. Residues Arg95 and Arg101 each contribute to the substrate site. Residues Asn108, Gln115, and 132-134 each bind NAD(+); that span reads VGN. Positions 134 and 165 each coordinate substrate. Residue His190 is the Proton acceptor of the active site.

It belongs to the LDH/MDH superfamily. MDH type 2 family.

It catalyses the reaction (S)-malate + NAD(+) = oxaloacetate + NADH + H(+). In terms of biological role, catalyzes the reversible oxidation of malate to oxaloacetate. This Variovorax paradoxus (strain S110) protein is Malate dehydrogenase.